A 439-amino-acid polypeptide reads, in one-letter code: ATP-dependent RNA helicase SrmB (439 aa).

The Q motif motif lies at Ser-4 to Met-32. A Helicase ATP-binding domain is found at Ile-35 to Lys-209. Ala-48–Thr-55 is a binding site for ATP. The DEAD box motif lies at Asp-157–Asp-160. A Helicase C-terminal domain is found at Lys-237 to Lys-387. Residues Pro-381–Ser-393 show a composition bias toward basic and acidic residues. A disordered region spans residues Pro-381–Val-439. Composition is skewed to basic residues over residues Val-394–Lys-403 and Thr-412–Val-439.

Belongs to the DEAD box helicase family. SrmB subfamily. As to quaternary structure, interacts with the 50S ribosomal subunit.

It is found in the cytoplasm. It catalyses the reaction ATP + H2O = ADP + phosphate + H(+). Functionally, DEAD-box RNA helicase involved in the assembly of the 50S ribosomal subunit at low temperature. Exhibits RNA-stimulated ATP hydrolysis and RNA unwinding activity. This is ATP-dependent RNA helicase SrmB from Haemophilus influenzae (strain ATCC 51907 / DSM 11121 / KW20 / Rd).